The sequence spans 251 residues: Small ribosomal subunit protein uS2 (251 aa).

Residues 232 to 251 (EAIAEMDEQVEEDAEEASND) form a disordered region.

The protein belongs to the universal ribosomal protein uS2 family.

In Chlorobaculum parvum (strain DSM 263 / NCIMB 8327) (Chlorobium vibrioforme subsp. thiosulfatophilum), this protein is Small ribosomal subunit protein uS2.